Reading from the N-terminus, the 830-residue chain is MAPQPLKVGTSKLSKMVKSAPKTAGKSKKRAVEQVSEESDEEFGDQGSGIDMSDDEEEVDGDDEEDEDEAFPEFDSELEDNDQEEASDEEQDEQDTSDESEIVEEDSDSESGYNTSDIERMYASDDDLSSEENKDLPVDEKLSRLIAKNTVKPDDSIGTDDKISRAKEGVGRLVPSKHVKGSFVREYDEYEAGYGSESSTEDNPNTVGNIPMEWYDDLPHIGYDVNGRKIFRPLQGDELDKFLANVEDPSAWTSAEDKLLQQNVQLSDKELDIIRRLERAENPDADFDPYQPTIEWFTGEGKERVMPLSAAPEPKRRFVPSKWEHKKIMKIVKAIREGRIIPNKPSAEKPRFYPIWSDADQHNPHVMYMPAPQLPPPKTAESYNPPEEYLPTEEEKAEWEAMDKEDRKTDFLPEKYDALRKVPGYKNLVQEKFERCLDLYLAPRTRRVKLNIDPDSLIPKLPAPKELKPFPIASTVQYRHPGDTRVRSVSTSPDGQWIASGSEDGVVRVWDLGNGREVWRWDLHAGPIQYVEWSPSREESLLVALVAGKIAVLSPLALVAPHIAAQTLTHSNTAFATSSATTKQGAGNEVKGIESVKWTRPSERERERGVLVYVEVPGTPKQVTWHRKGDYFATVASDAANKSVLIHQLSRHGSQSPFRKTPGTIQRVAFHPSKPHFFAATQRYIRLYDLAAQKLIRTLQSGVKWISSMDVHSGGDNLIIGSYDKKLAWFDMDLSAKPYKTLRYHNRALRSVAYHPTLPLFASASDDGTVHIFHCTVYTDLMQNPLIVPLKILRGHKVIDGIGVLDLRWVPGKPWLVSSGADGEVRLWCS.

Residues Met-1–Lys-141 are disordered. 2 stretches are compositionally biased toward acidic residues: residues Val-35 to Gly-44 and Met-52 to Ser-109. Basic and acidic residues predominate over residues Glu-131–Lys-141. WD repeat units lie at residues Pro-481–Arg-520, Leu-523–Ile-563, Lys-660–Thr-698, Ser-701–Lys-740, Tyr-744–Gln-783, and Ile-799–Ser-830.

It belongs to the WD repeat BOP1/ERB1 family. Component of the NOP7 complex, composed of ERB1, NOP7 and YTM1. The complex is held together by ERB1, which interacts with NOP7 via its N-terminal domain and with YTM1 via a high-affinity interaction between the seven-bladed beta-propeller domains of the 2 proteins. The NOP7 complex associates with the 66S pre-ribosome.

The protein localises to the nucleus. The protein resides in the nucleolus. It localises to the nucleoplasm. Its function is as follows. Component of the NOP7 complex, which is required for maturation of the 25S and 5.8S ribosomal RNAs and formation of the 60S ribosome. The polypeptide is Ribosome biogenesis protein ERB1 (Cryptococcus neoformans var. neoformans serotype D (strain B-3501A) (Filobasidiella neoformans)).